The sequence spans 1014 residues: Probable LRR receptor-like serine/threonine-protein kinase At1g07650 (1014 aa).

Positions Met1–Gly23 are cleaved as a signal peptide. Residues Phe24 to Asp619 lie on the Extracellular side of the membrane. Asn76, Asn87, and Asn101 each carry an N-linked (GlcNAc...) asparagine glycan. LRR repeat units lie at residues Ser89–Lys112, Leu113–Met137, Leu139–Leu160, Thr161–Leu184, His186–Leu207, Leu208–Arg234, Leu256–Asn279, Leu280–Leu304, Lys305–Asn327, Lys329–Arg352, and Lys354–Arg376. A glycan (N-linked (GlcNAc...) asparagine) is linked at Asn165. Asn210, Asn220, and Asn231 each carry an N-linked (GlcNAc...) asparagine glycan. N-linked (GlcNAc...) asparagine glycosylation is found at Asn362, Asn389, Asn474, Asn481, and Asn511. Residues Leu516–Ile539 form an LRR 12 repeat. Asn570 is a glycosylation site (N-linked (GlcNAc...) asparagine). A helical membrane pass occupies residues Ile620–Gly640. Residues Val641–Asp1014 are Cytoplasmic-facing. A Phosphothreonine modification is found at Thr667. Positions Phe678–Leu960 constitute a Protein kinase domain. ATP is bound by residues Ile684–Val692 and Lys706. Residue Tyr751 is modified to Phosphotyrosine. The active-site Proton acceptor is Asp805. 2 positions are modified to phosphoserine: Ser809 and Ser838. Phosphothreonine is present on residues Thr839 and Thr844. Phosphotyrosine is present on Tyr852. Ser989 is modified (phosphoserine). Polar residues predominate over residues Ser989–Ser1002. A disordered region spans residues Ser989–Asp1014.

Belongs to the protein kinase superfamily. Ser/Thr protein kinase family.

It is found in the membrane. It carries out the reaction L-seryl-[protein] + ATP = O-phospho-L-seryl-[protein] + ADP + H(+). It catalyses the reaction L-threonyl-[protein] + ATP = O-phospho-L-threonyl-[protein] + ADP + H(+). The polypeptide is Probable LRR receptor-like serine/threonine-protein kinase At1g07650 (Arabidopsis thaliana (Mouse-ear cress)).